Here is an 866-residue protein sequence, read N- to C-terminus: Protein translocase subunit SecA (866 aa).

ATP-binding positions include Gln87, 105-109, and Asp514; that span reads GEGKT. The segment at 819–858 is disordered; it reads VSPIGTPSSEGGGETSGADTYSNKKIGRNDPCPCGSGKKY. Residues Cys850, Cys852, Cys861, and Cys862 each coordinate Zn(2+).

The protein belongs to the SecA family. Monomer and homodimer. Part of the essential Sec protein translocation apparatus which comprises SecA, SecYEG and auxiliary proteins SecDF. Other proteins may also be involved. It depends on Zn(2+) as a cofactor.

The protein localises to the cell inner membrane. It is found in the cytoplasm. The enzyme catalyses ATP + H2O + cellular proteinSide 1 = ADP + phosphate + cellular proteinSide 2.. Functionally, part of the Sec protein translocase complex. Interacts with the SecYEG preprotein conducting channel. Has a central role in coupling the hydrolysis of ATP to the transfer of proteins into and across the cell membrane, serving as an ATP-driven molecular motor driving the stepwise translocation of polypeptide chains across the membrane. The chain is Protein translocase subunit SecA from Elusimicrobium minutum (strain Pei191).